The chain runs to 139 residues: Putative nickel-responsive regulator (139 aa).

Positions 79, 90, 92, and 98 each coordinate Ni(2+).

It belongs to the transcriptional regulatory CopG/NikR family. The cofactor is Ni(2+).

Transcriptional regulator. This is Putative nickel-responsive regulator from Nitratidesulfovibrio vulgaris (strain ATCC 29579 / DSM 644 / CCUG 34227 / NCIMB 8303 / VKM B-1760 / Hildenborough) (Desulfovibrio vulgaris).